Here is a 363-residue protein sequence, read N- to C-terminus: Zinc phosphodiesterase ELAC protein 1 (363 aa).

Residues histidine 62, histidine 64, aspartate 66, histidine 67, histidine 182, aspartate 253, and histidine 313 each contribute to the Zn(2+) site. Aspartate 66 serves as the catalytic Proton acceptor.

It belongs to the RNase Z family. As to quaternary structure, homodimer. Requires Zn(2+) as cofactor.

The protein localises to the cytoplasm. The protein resides in the cytosol. Its subcellular location is the nucleus. The catalysed reaction is Endonucleolytic cleavage of RNA, removing extra 3' nucleotides from tRNA precursor, generating 3' termini of tRNAs. A 3'-hydroxy group is left at the tRNA terminus and a 5'-phosphoryl group is left at the trailer molecule.. In terms of biological role, zinc phosphodiesterase, which displays some tRNA 3'-processing endonuclease activity. Specifically involved in tRNA repair: acts downstream of the ribosome-associated quality control (RQC) pathway by removing a 2',3'-cyclic phosphate from tRNAs following cleavage by ANKZF1. tRNAs are then processed by TRNT1. The chain is Zinc phosphodiesterase ELAC protein 1 (ELAC1) from Bos taurus (Bovine).